Reading from the N-terminus, the 545-residue chain is MTTRYIFVTGGVVSSLGKGIAAASLAAILEARGLNVTIMKLDPYINVDPGTMSPTQHGEVFVTEDGAETDLDLGHYERFIRTKMNRRNNFTTGRIYEEVLRKERRGDYLGATIQVIPHITNAIKEKVLAGGEGHDVAIVEIGGTVGDIESLPFLESIRQLGVELGRDRTLFMHLTLVPFLGAAGEVKTKPTQHSVKELRSIGIAPDVLVCRGDRAIPANEKAKISLFCNVEERAVISLKDVDSIYKIPALLRSQGLDDLVVKRFGLECREADLSEWENVIYQEANPNGEVVIGMVGKYIELPDAYKSVNEALKHAGLKNRVSVTIKYIDSQTVEAKGEEVLQGLDGILVPGGFGERGVEGKILAAKFARENNLPYFGICLGMQVALIEFARNVAGMADAHSTEFNKETPFPVVGLITEWIDEEGNVEQRHEASDLGGTMRLGAQLCHLLDGSKAAQAYKGNSCVERHRHRYEVNNKYRERLEQAGMIFSGLSSDRKLVEMIELKDHPWFVAGQFHPEFTSTPRDGHPLFEGFIAAASAHQKRDLK.

An amidoligase domain region spans residues 1–266; sequence MTTRYIFVTG…DDLVVKRFGL (266 aa). A CTP-binding site is contributed by S14. UTP is bound at residue S14. ATP is bound by residues 15–20 and D72; that span reads SLGKGI. Residues D72 and E140 each contribute to the Mg(2+) site. Residues 147–149, 187–192, and K223 each bind CTP; these read DIE and KTKPTQ. Residues 187–192 and K223 each bind UTP; that span reads KTKPTQ. An ATP-binding site is contributed by 239-241; sequence KDV. Residues 291 to 542 form the Glutamine amidotransferase type-1 domain; the sequence is VIGMVGKYIE…IAAASAHQKR (252 aa). Position 352 (G352) interacts with L-glutamine. The active-site Nucleophile; for glutamine hydrolysis is C379. L-glutamine-binding positions include 380 to 383, E403, and R470; that span reads LGMQ. Catalysis depends on residues H515 and E517.

This sequence belongs to the CTP synthase family. In terms of assembly, homotetramer.

It carries out the reaction UTP + L-glutamine + ATP + H2O = CTP + L-glutamate + ADP + phosphate + 2 H(+). The catalysed reaction is L-glutamine + H2O = L-glutamate + NH4(+). The enzyme catalyses UTP + NH4(+) + ATP = CTP + ADP + phosphate + 2 H(+). It participates in pyrimidine metabolism; CTP biosynthesis via de novo pathway; CTP from UDP: step 2/2. Its activity is regulated as follows. Allosterically activated by GTP, when glutamine is the substrate; GTP has no effect on the reaction when ammonia is the substrate. The allosteric effector GTP functions by stabilizing the protein conformation that binds the tetrahedral intermediate(s) formed during glutamine hydrolysis. Inhibited by the product CTP, via allosteric rather than competitive inhibition. In terms of biological role, catalyzes the ATP-dependent amination of UTP to CTP with either L-glutamine or ammonia as the source of nitrogen. Regulates intracellular CTP levels through interactions with the four ribonucleotide triphosphates. This Shewanella baltica (strain OS155 / ATCC BAA-1091) protein is CTP synthase.